Consider the following 63-residue polypeptide: Large ribosomal subunit protein bL32 (63 aa).

Disordered regions lie at residues 1–25 (MAVP…LTTP) and 42–63 (VSPK…QNND). Residues 7–20 (KTSKQKKRSRRGHI) show a composition bias toward basic residues. The span at 54–63 (ANENKQQNND) shows a compositional bias: polar residues.

This sequence belongs to the bacterial ribosomal protein bL32 family.

The protein is Large ribosomal subunit protein bL32 of Lactobacillus johnsonii (strain CNCM I-12250 / La1 / NCC 533).